A 419-amino-acid polypeptide reads, in one-letter code: Lipid II:glycine glycyltransferase (419 aa).

It belongs to the FemABX family.

The protein localises to the cytoplasm. It catalyses the reaction beta-D-GlcNAc-(1-&gt;4)-Mur2Ac(oyl-L-Ala-D-isoglutaminyl-L-Lys-D-Ala-D-Ala)-di-trans,octa-cis-undecaprenyl diphosphate + glycyl-tRNA(Gly) = beta-D-GlcNAc-(1-&gt;4)-Mur2Ac(oyl-L-Ala-D-isoglutaminyl-L-Lys-(N(6)-Gly)-D-Ala-D-Ala)-di-trans,octa-cis-undecaprenyl diphosphate + tRNA(Gly) + H(+). In terms of biological role, catalyzes the incorporation of amino acid(s) into the interchain peptide bridge of peptidoglycan, using aminoacyl-tRNA as amino acid donor. The protein is Lipid II:glycine glycyltransferase (femX) of Staphylococcus haemolyticus (strain JCSC1435).